A 49-amino-acid chain; its full sequence is Delta-actitoxin-Axm1h (49 aa).

3 disulfides stabilise this stretch: Cys4-Cys46, Cys6-Cys36, and Cys29-Cys47.

Belongs to the sea anemone sodium channel inhibitory toxin family. Type I subfamily.

The protein resides in the secreted. The protein localises to the nematocyst. Its function is as follows. Binds specifically to voltage-gated sodium channels (Nav) (site 3), thereby delaying their inactivation during signal transduction. Thus it may strongly stimulate mammalian cardiac muscle contraction. The polypeptide is Delta-actitoxin-Axm1h (Anthopleura xanthogrammica (Giant green sea anemone)).